The primary structure comprises 307 residues: Quinolinate synthase (307 aa).

Residues His-20 and Ser-37 each coordinate iminosuccinate. Position 82 (Cys-82) interacts with [4Fe-4S] cluster. Iminosuccinate is bound by residues 108 to 110 (YIN) and Ser-125. A [4Fe-4S] cluster-binding site is contributed by Cys-168. Iminosuccinate contacts are provided by residues 194–196 (HPE) and Thr-219. Cys-264 contributes to the [4Fe-4S] cluster binding site.

Belongs to the quinolinate synthase family. Type 2 subfamily. The cofactor is [4Fe-4S] cluster.

It is found in the cytoplasm. It catalyses the reaction iminosuccinate + dihydroxyacetone phosphate = quinolinate + phosphate + 2 H2O + H(+). The protein operates within cofactor biosynthesis; NAD(+) biosynthesis; quinolinate from iminoaspartate: step 1/1. Functionally, catalyzes the condensation of iminoaspartate with dihydroxyacetone phosphate to form quinolinate. The protein is Quinolinate synthase of Pyrobaculum aerophilum (strain ATCC 51768 / DSM 7523 / JCM 9630 / CIP 104966 / NBRC 100827 / IM2).